The following is a 186-amino-acid chain: Adenine phosphoribosyltransferase (186 aa).

Belongs to the purine/pyrimidine phosphoribosyltransferase family. As to quaternary structure, homodimer.

It is found in the cytoplasm. It carries out the reaction AMP + diphosphate = 5-phospho-alpha-D-ribose 1-diphosphate + adenine. Its pathway is purine metabolism; AMP biosynthesis via salvage pathway; AMP from adenine: step 1/1. In terms of biological role, catalyzes a salvage reaction resulting in the formation of AMP, that is energically less costly than de novo synthesis. The protein is Adenine phosphoribosyltransferase of Xanthomonas oryzae pv. oryzae (strain MAFF 311018).